The primary structure comprises 170 residues: Cytochrome b6-f complex subunit 4 (170 aa).

The next 3 helical transmembrane spans lie at 36 to 56 (LLYIFPVVILGTIACNVGLAV), 95 to 115 (LLGVLLMVSVPAGLLTVPFLE), and 131 to 151 (TVFLIGTAVALWLGIGATLPI).

The protein belongs to the cytochrome b family. PetD subfamily. The 4 large subunits of the cytochrome b6-f complex are cytochrome b6, subunit IV (17 kDa polypeptide, petD), cytochrome f and the Rieske protein, while the 4 small subunits are petG, petL, petM and petN. The complex functions as a dimer.

It localises to the plastid. Its subcellular location is the chloroplast thylakoid membrane. Functionally, component of the cytochrome b6-f complex, which mediates electron transfer between photosystem II (PSII) and photosystem I (PSI), cyclic electron flow around PSI, and state transitions. This chain is Cytochrome b6-f complex subunit 4, found in Nymphaea alba (White water-lily).